The chain runs to 203 residues: ATP synthase subunit b (203 aa).

Residues 14 to 34 form a helical membrane-spanning segment; the sequence is FVWPLLGAGLLLAAEGVAWAS.

This sequence belongs to the ATPase B chain family. As to quaternary structure, F-type ATPases have 2 components, F(1) - the catalytic core - and F(0) - the membrane proton channel. F(1) has five subunits: alpha(3), beta(3), gamma(1), delta(1), epsilon(1). F(0) has three main subunits: a(1), b(2) and c(10-14). The alpha and beta chains form an alternating ring which encloses part of the gamma chain. F(1) is attached to F(0) by a central stalk formed by the gamma and epsilon chains, while a peripheral stalk is formed by the delta and b chains.

Its subcellular location is the cell inner membrane. Its function is as follows. F(1)F(0) ATP synthase produces ATP from ADP in the presence of a proton or sodium gradient. F-type ATPases consist of two structural domains, F(1) containing the extramembraneous catalytic core and F(0) containing the membrane proton channel, linked together by a central stalk and a peripheral stalk. During catalysis, ATP synthesis in the catalytic domain of F(1) is coupled via a rotary mechanism of the central stalk subunits to proton translocation. Component of the F(0) channel, it forms part of the peripheral stalk, linking F(1) to F(0). The protein is ATP synthase subunit b of Syntrophobacter fumaroxidans (strain DSM 10017 / MPOB).